We begin with the raw amino-acid sequence, 98 residues long: MSGNPGSSLSALRPTPPERGSFPLDHDGECTKYMQEYLKCMQLVQNENAMNCRLLAKDYLRCRMDHQLMDYDEWSHLGLPEDAPGNNGKTIKDATDNK.

Residues 1–10 (MSGNPGSSLS) show a composition bias toward polar residues. The interval 1 to 25 (MSGNPGSSLSALRPTPPERGSFPLD) is disordered. In terms of domain architecture, CHCH spans 27-70 (DGECTKYMQEYLKCMQLVQNENAMNCRLLAKDYLRCRMDHQLMD). Short sequence motifs (cx9C motif) lie at residues 30-40 (CTKYMQEYLKC) and 52-62 (CRLLAKDYLRC). 2 disulfides stabilise this stretch: Cys30–Cys62 and Cys40–Cys52. The tract at residues 76–98 (HLGLPEDAPGNNGKTIKDATDNK) is disordered.

Belongs to the COX19 family.

It is found in the cytoplasm. It localises to the mitochondrion intermembrane space. Functionally, required for the assembly of mitochondrial cytochrome c oxidase. This is Cytochrome c oxidase assembly protein COX19 (COX19) from Saccharomyces cerevisiae (strain ATCC 204508 / S288c) (Baker's yeast).